A 126-amino-acid chain; its full sequence is Small ribosomal subunit protein uS13 (126 aa).

The disordered stretch occupies residues 98 to 126; it reads PVRGQSTKNNARTRKGRKKTVANKKKATK. Over residues 108–126 the composition is skewed to basic residues; it reads ARTRKGRKKTVANKKKATK.

The protein belongs to the universal ribosomal protein uS13 family. In terms of assembly, part of the 30S ribosomal subunit. Forms a loose heterodimer with protein S19. Forms two bridges to the 50S subunit in the 70S ribosome.

Its function is as follows. Located at the top of the head of the 30S subunit, it contacts several helices of the 16S rRNA. In the 70S ribosome it contacts the 23S rRNA (bridge B1a) and protein L5 of the 50S subunit (bridge B1b), connecting the 2 subunits; these bridges are implicated in subunit movement. Contacts the tRNAs in the A and P-sites. The chain is Small ribosomal subunit protein uS13 from Phocaeicola vulgatus (strain ATCC 8482 / DSM 1447 / JCM 5826 / CCUG 4940 / NBRC 14291 / NCTC 11154) (Bacteroides vulgatus).